We begin with the raw amino-acid sequence, 166 residues long: Ribonuclease H (166 aa).

Residues 5-147 enclose the RNase H type-1 domain; it reads PRKRVALFTD…VDREARRQAQ (143 aa). Positions 14, 52, 74, and 139 each coordinate Mg(2+). A disordered region spans residues 128 to 166; that stretch reads GHTGHPENERVDREARRQAQSQAKTPCPPQAPTLFHEEA. The segment covering 131–144 has biased composition (basic and acidic residues); sequence GHPENERVDREARR.

Belongs to the RNase H family. In terms of assembly, monomer. It depends on Mg(2+) as a cofactor.

Its subcellular location is the cytoplasm. The catalysed reaction is Endonucleolytic cleavage to 5'-phosphomonoester.. In terms of biological role, endonuclease that specifically degrades the RNA of RNA-DNA hybrids. This chain is Ribonuclease H, found in Thermus thermophilus (strain ATCC BAA-163 / DSM 7039 / HB27).